The sequence spans 280 residues: DegV domain-containing protein M6_Spy1440 (280 aa).

The region spanning 3-280 is the DegV domain; that stretch reads WKIVTDSGCD…DGGLLMGYEI (278 aa). The hexadecanoate site is built by Ser-63 and Ser-91.

May bind long-chain fatty acids, such as palmitate, and may play a role in lipid transport or fatty acid metabolism. The sequence is that of DegV domain-containing protein M6_Spy1440 from Streptococcus pyogenes serotype M6 (strain ATCC BAA-946 / MGAS10394).